The chain runs to 223 residues: Large ribosomal subunit protein uL3 (223 aa).

It belongs to the universal ribosomal protein uL3 family. As to quaternary structure, part of the 50S ribosomal subunit. Forms a cluster with proteins L14 and L19.

One of the primary rRNA binding proteins, it binds directly near the 3'-end of the 23S rRNA, where it nucleates assembly of the 50S subunit. In Cutibacterium acnes (strain DSM 16379 / KPA171202) (Propionibacterium acnes), this protein is Large ribosomal subunit protein uL3.